The primary structure comprises 78 residues: Acyl carrier protein (78 aa).

The 75-residue stretch at 4–78 (AQIKEKVYDI…QQAIDYIVKK (75 aa)) folds into the Carrier domain. Serine 39 carries the O-(pantetheine 4'-phosphoryl)serine modification.

Belongs to the acyl carrier protein (ACP) family. 4'-phosphopantetheine is transferred from CoA to a specific serine of apo-ACP by AcpS. This modification is essential for activity because fatty acids are bound in thioester linkage to the sulfhydryl of the prosthetic group.

It localises to the cytoplasm. Its pathway is lipid metabolism; fatty acid biosynthesis. Its function is as follows. Carrier of the growing fatty acid chain in fatty acid biosynthesis. In Chlorobium phaeobacteroides (strain DSM 266 / SMG 266 / 2430), this protein is Acyl carrier protein.